A 352-amino-acid polypeptide reads, in one-letter code: Histidine biosynthesis bifunctional protein HisB (352 aa).

A histidinol-phosphatase region spans residues 1-163 (MKKILFIDRD…MVASAIINDA (163 aa)). Aspartate 8 serves as the catalytic Nucleophile. Positions 8 and 10 each coordinate Mg(2+). The active-site Proton donor is the aspartate 10. Positions 91, 93, 99, and 101 each coordinate Zn(2+). A Mg(2+)-binding site is contributed by aspartate 128. The segment at 164–352 (RKASVQRKTK…NYLPSTKGVL (189 aa)) is imidazoleglycerol-phosphate dehydratase.

The protein in the N-terminal section; belongs to the histidinol-phosphatase family. This sequence in the C-terminal section; belongs to the imidazoleglycerol-phosphate dehydratase family. Requires Mg(2+) as cofactor. Zn(2+) is required as a cofactor.

Its subcellular location is the cytoplasm. It catalyses the reaction D-erythro-1-(imidazol-4-yl)glycerol 3-phosphate = 3-(imidazol-4-yl)-2-oxopropyl phosphate + H2O. The enzyme catalyses L-histidinol phosphate + H2O = L-histidinol + phosphate. The protein operates within amino-acid biosynthesis; L-histidine biosynthesis; L-histidine from 5-phospho-alpha-D-ribose 1-diphosphate: step 6/9. Its pathway is amino-acid biosynthesis; L-histidine biosynthesis; L-histidine from 5-phospho-alpha-D-ribose 1-diphosphate: step 8/9. The protein is Histidine biosynthesis bifunctional protein HisB of Legionella pneumophila (strain Lens).